Here is a 386-residue protein sequence, read N- to C-terminus: Acyl-lipid omega-3 desaturase (cytochrome b5), endoplasmic reticulum (386 aa).

The tract at residues 1–30 (MVVAMDQRTNVNGDPGAGDRKKEERFDPSA) is disordered. A compositionally biased stretch (basic and acidic residues) spans 17-27 (AGDRKKEERFD). A helical membrane pass occupies residues 63–83 (IIAVAALAIAAVYVDSWFLWP). Residues 101-105 (HDCGH) carry the Histidine box-1 motif. The Histidine box-2 motif lies at 137 to 141 (HRTHH). The next 2 membrane-spanning stretches (helical) occupy residues 220–240 (WSIM…LAVL) and 242–262 (VYGV…YLHH). Residues 304-308 (HVIHH) carry the Histidine box-3 motif.

The protein belongs to the fatty acid desaturase type 1 family. In terms of tissue distribution, abundant in leaves and seedlings. Barely detectable in root tissue.

It localises to the endoplasmic reticulum membrane. The catalysed reaction is a (9Z,12Z)-octadecadienoyl-containing glycerolipid + 2 Fe(II)-[cytochrome b5] + O2 + 2 H(+) = (9Z,12Z,15Z)-octadecatrienoyl-containing glycerolipid + 2 Fe(III)-[cytochrome b5] + 2 H2O. It participates in lipid metabolism; polyunsaturated fatty acid biosynthesis. Functionally, microsomal (ER) omega-3 fatty acid desaturase introduces the third double bond in the biosynthesis of 18:3 fatty acids, important constituents of plant membranes. It is thought to use cytochrome b5 as an electron donor and to act on fatty acids esterified to phosphatidylcholine and, possibly, other phospholipids. The protein is Acyl-lipid omega-3 desaturase (cytochrome b5), endoplasmic reticulum of Arabidopsis thaliana (Mouse-ear cress).